A 908-amino-acid polypeptide reads, in one-letter code: Transcriptional repressor ILP1 (908 aa).

2 disordered regions span residues 1–113 (MGSN…PQAG) and 238–277 (VGPR…EEDK). Over residues 25-47 (ATPSSKPTSTLSSSKPKTLSASA) the composition is skewed to low complexity. Positions 426–453 (MQNKGSLIEEIEDQMKELNEKHALSILE) form a coiled coil. A compositionally biased stretch (basic and acidic residues) spans 513 to 530 (EFGRDENLQKRREVEQRA). Positions 513–574 (EFGRDENLQK…ESDTETSAYK (62 aa)) are disordered.

This sequence belongs to the GCF family. Interacts with STIPL1/NTR1.

The protein localises to the nucleus. In terms of biological role, transcriptional repressor regulating endoreduplication through control of A-type cyclins expression. Does not bind to promoter sequences (in vitro) and may act by interacting with tissue-specific transcription factors. Enhances the endocycle in endoreduplicating cells in seedlings. Required for efficient splicing. In Arabidopsis thaliana (Mouse-ear cress), this protein is Transcriptional repressor ILP1.